The following is a 116-amino-acid chain: Putative membrane protein (116 aa).

The chain crosses the membrane as a helical span at residues 13–33; that stretch reads VISIITFILVIAIFVIEIVSC.

Its subcellular location is the host membrane. The protein is Putative membrane protein of Alethinophid 1 reptarenavirus (isolate AlRrV1/Boa/USA/BC/2009) (Golden Gate virus).